Consider the following 376-residue polypeptide: Probable dual-specificity RNA methyltransferase RlmN (376 aa).

The Proton acceptor role is filled by glutamate 96. Positions 102 to 346 (YPDRSTVCVS…CTVRVERGVE (245 aa)) constitute a Radical SAM core domain. Cysteine 109 and cysteine 351 are disulfide-bonded. Cysteine 116, cysteine 120, and cysteine 123 together coordinate [4Fe-4S] cluster. S-adenosyl-L-methionine-binding positions include 171 to 172 (GE), serine 203, 226 to 228 (SLH), and asparagine 308. Catalysis depends on cysteine 351, which acts as the S-methylcysteine intermediate.

This sequence belongs to the radical SAM superfamily. RlmN family. It depends on [4Fe-4S] cluster as a cofactor.

It localises to the cytoplasm. It catalyses the reaction adenosine(2503) in 23S rRNA + 2 reduced [2Fe-2S]-[ferredoxin] + 2 S-adenosyl-L-methionine = 2-methyladenosine(2503) in 23S rRNA + 5'-deoxyadenosine + L-methionine + 2 oxidized [2Fe-2S]-[ferredoxin] + S-adenosyl-L-homocysteine. It carries out the reaction adenosine(37) in tRNA + 2 reduced [2Fe-2S]-[ferredoxin] + 2 S-adenosyl-L-methionine = 2-methyladenosine(37) in tRNA + 5'-deoxyadenosine + L-methionine + 2 oxidized [2Fe-2S]-[ferredoxin] + S-adenosyl-L-homocysteine. Functionally, specifically methylates position 2 of adenine 2503 in 23S rRNA and position 2 of adenine 37 in tRNAs. In Chloroflexus aurantiacus (strain ATCC 29366 / DSM 635 / J-10-fl), this protein is Probable dual-specificity RNA methyltransferase RlmN.